Reading from the N-terminus, the 357-residue chain is Putative RING-H2 finger protein ATL37 (357 aa).

Residues 1 to 31 (MTIFTRDFSHRILACVLLPLFLFQCLPYVTC) form the signal peptide. The helical transmembrane segment at 47–67 (SSIIGIVLLSLFLLLLVVYCL) threads the bilayer. The RING-type; atypical zinc-finger motif lies at 120 to 162 (CAICLCEFEDEEPLRWMPPCSHTFHANCIDEWLSSRSTCPVCR). Residues 172–210 (SFPHPSMDVETGNAQRGVQESPDERSLTGSSVTCNNNAN) form a disordered region. The span at 198–210 (LTGSSVTCNNNAN) shows a compositional bias: polar residues. The residue at position 273 (Ser273) is a Phosphoserine. Disordered regions lie at residues 281–304 (RSSR…QGRQ) and 327–357 (LDRD…PEKN). Residues 283–304 (SRQGYRSGSVGNERTGFSQGRQ) show a composition bias toward polar residues. Residues 340–357 (NDKDFGERSFQRLMPEKN) are compositionally biased toward basic and acidic residues.

It belongs to the RING-type zinc finger family. ATL subfamily.

It is found in the membrane. It carries out the reaction S-ubiquitinyl-[E2 ubiquitin-conjugating enzyme]-L-cysteine + [acceptor protein]-L-lysine = [E2 ubiquitin-conjugating enzyme]-L-cysteine + N(6)-ubiquitinyl-[acceptor protein]-L-lysine.. The protein operates within protein modification; protein ubiquitination. The sequence is that of Putative RING-H2 finger protein ATL37 (ATL37) from Arabidopsis thaliana (Mouse-ear cress).